Consider the following 1020-residue polypeptide: Sodium/potassium-transporting ATPase subunit alpha-2 (1020 aa).

A propeptide spanning residues 1–5 (MGRGA) is cleaved from the precursor. A disordered region spans residues 1–31 (MGRGAGREYSPAATTAENGGGKKKQKEKELD). At 6–85 (GREYSPAATT…NALTPPPTTP (80 aa)) the chain is on the cytoplasmic side. Ser10 bears the Phosphoserine mark. The interaction with phosphoinositide-3 kinase stretch occupies residues 80 to 82 (PPP). Residues 86 to 106 (EWVKFCRQLFGGFSILLWIGA) traverse the membrane as a helical segment. Topologically, residues 107–129 (ILCFLAFGIQAAMEDEPSNDNLY) are extracellular. A helical transmembrane segment spans residues 130–150 (LGVVLAAVVIVTGCFSYYQEA). Residues 151 to 286 (KSSKIMDSFK…VGRTPIAMEI (136 aa)) lie on the Cytoplasmic side of the membrane. Residues 212–227 (DNSSLTGESEPQTRSP) are compositionally biased toward polar residues. The interval 212–231 (DNSSLTGESEPQTRSPEFTH) is disordered. Residues 287–306 (EHFIQLITGVAVFLGVSFFV) traverse the membrane as a helical segment. Over 307 to 318 (LSLILGYSWLEA) the chain is Extracellular. A helical transmembrane segment spans residues 319-336 (VIFLIGIIVANVPEGLLA). The Cytoplasmic segment spans residues 337 to 769 (TVTVCLTLTA…EEGRLIFDNL (433 aa)). The 4-aspartylphosphate intermediate role is filled by Asp374. 4 positions are modified to phosphoserine: Ser439, Ser450, Ser496, and Ser559. The residue at position 570 (Thr570) is a Phosphothreonine. A phosphoserine mark is found at Ser587 and Ser672. Asp714 and Asp718 together coordinate Mg(2+). The helical transmembrane segment at 770–789 (KKSIAYTLTSNIPEITPFLL) threads the bilayer. Over 790–799 (FIIANIPLPL) the chain is Extracellular. Residues 800 to 820 (GTVTILCIDLGTDMVPAISLA) form a helical membrane-spanning segment. Over 821-840 (YEAAESDIMKRQPRNPQTDK) the chain is Cytoplasmic. Ser826 bears the Phosphoserine mark. The chain crosses the membrane as a helical span at residues 841–863 (LVNERLISMAYGQIGMIQALGGF). Residues 864–915 (FTYFVILAENGFLPSRLLGIRLDWDDRSMNDLEDSYGQEWTYEQRKVVEFTC) are Extracellular-facing. A helical membrane pass occupies residues 916–935 (HTAFFASIVVVQWADLIICK). Residues 936-948 (TRRNSVFQQGMKN) are Cytoplasmic-facing. Ser940 is modified (phosphoserine; by PKA). The helical transmembrane segment at 949–967 (KILIFGLLEETALAAFLSY) threads the bilayer. The Extracellular portion of the chain corresponds to 968–982 (CPGMGVALRMYPLKV). The chain crosses the membrane as a helical span at residues 983–1003 (TWWFCAFPYSLLIFIYDEVRK). Topologically, residues 1004–1020 (LILRRYPGGWVEKETYY) are cytoplasmic.

The protein belongs to the cation transport ATPase (P-type) (TC 3.A.3) family. Type IIC subfamily. As to quaternary structure, the sodium/potassium-transporting ATPase is composed of a catalytic alpha subunit, an auxiliary non-catalytic beta subunit and an additional regulatory subunit. Interacts with regulatory subunit FXYD1.

It is found in the membrane. It localises to the cell membrane. It carries out the reaction K(+)(out) + Na(+)(in) + ATP + H2O = K(+)(in) + Na(+)(out) + ADP + phosphate + H(+). In terms of biological role, this is the catalytic component of the active enzyme, which catalyzes the hydrolysis of ATP coupled with the exchange of sodium and potassium ions across the plasma membrane. This action creates the electrochemical gradient of sodium and potassium, providing the energy for active transport of various nutrients. The protein is Sodium/potassium-transporting ATPase subunit alpha-2 (ATP1A2) of Bos taurus (Bovine).